A 227-amino-acid polypeptide reads, in one-letter code: E3 ubiquitin-protein ligase ZNRF1 (227 aa).

The segment at 1 to 42 (MGGKQSTAARSRGPFPGVSTDDSAVPPPGGAPHFGHYRTGGG) is disordered. Residue glycine 2 is the site of N-myristoyl glycine attachment. The interval 2-10 (GGKQSTAAR) is required for endosomal and lysosomal localization and myristoylation. Phosphoserine occurs at positions 50, 52, and 53. Residues 65–105 (GGVPFSLYTPASRGTGDSERAPGGGGSTSDSTYAHGNGYQE) form a disordered region. Phosphotyrosine is present on tyrosine 103. Phosphoserine is present on serine 123. The RING-type; atypical zinc-finger motif lies at 184–225 (CVICLEELLQGDTIARLPCLCIYHKSCIDSWFEVNRSCPEHP).

Interacts with AKT1, GLUL and TUBB2A. Interacts with ZNRF2. Interacts (via its RING domain) with UBE2N. Interacts (when phosphorylated) with YWHAE. N-myristoylation targets ZNRF1 to intracellular membranes. In terms of processing, phosphorylated by SRC at Tyr-103; leading to 'Lys-63'-linked ubiquitination of TLR3, lysosomal trafficking and degradation.

The protein resides in the endosome. It localises to the lysosome. The protein localises to the membrane. It is found in the cytoplasmic vesicle. Its subcellular location is the secretory vesicle. The protein resides in the synaptic vesicle membrane. It carries out the reaction S-ubiquitinyl-[E2 ubiquitin-conjugating enzyme]-L-cysteine + [acceptor protein]-L-lysine = [E2 ubiquitin-conjugating enzyme]-L-cysteine + N(6)-ubiquitinyl-[acceptor protein]-L-lysine.. The protein operates within protein modification; protein ubiquitination. Functionally, E3 ubiquitin-protein ligase that plays a role in different processes including cell differentiation, receptor recycling or regulation of inflammation. Mediates the ubiquitination of AKT1 and GLUL, thereby playing a role in neuron cells differentiation. Plays a role in the establishment and maintenance of neuronal transmission and plasticity. Regulates Schwann cells differentiation by mediating ubiquitination of GLUL. Promotes neurodegeneration by mediating 'Lys-48'-linked polyubiquitination and subsequent degradation of AKT1 in axons: degradation of AKT1 prevents AKT1-mediated phosphorylation of GSK3B, leading to GSK3B activation and phosphorylation of DPYSL2/CRMP2 followed by destabilization of microtubule assembly in axons. Ubiquitinates the Na(+)/K(+) ATPase alpha-1 subunit/ATP1A1 and thereby influences its endocytosis and/or degradation. Controls ligand-induced EGFR signaling via mediating receptor ubiquitination and recruitment of the ESCRT machinery. Acts as a negative feedback mechanism controlling TLR3 trafficking by mediating TLR3 'Lys-63'-linked polyubiquitination to reduce type I IFN production. Modulates inflammation by promoting caveolin-1/CAV1 ubiquitination and degradation to regulate TLR4-activated immune response. The sequence is that of E3 ubiquitin-protein ligase ZNRF1 (Znrf1) from Mus musculus (Mouse).